We begin with the raw amino-acid sequence, 318 residues long: Magnetosome protein MamM (318 aa).

The transmembrane domain (TMD) stretch occupies residues 1 to 210 (MRKSGCAVCS…FMDAYRGLMD (210 aa)). 4 helical membrane-spanning segments follow: residues 13–33 (IGWV…FVGL), 39–59 (AMLA…MVII), 81–101 (FILS…LLVH), and 117–137 (LIVL…YFYS). The interval 211-318 (HTAGEAVQNR…DEVMLSKVDN (108 aa)) is C-terminal domain (CTD). Fe cation is bound by residues aspartate 249, histidine 264, histidine 285, and glutamate 289.

Belongs to the cation diffusion facilitator (CDF) transporter (TC 2.A.4) family. Forms homodimers via its C-terminal domain (CTD) in the presence of metal cations. Interacts with MamB via their CTD. Isolated CTD forms homodimers.

Its subcellular location is the magnetosome membrane. The protein resides in the cell inner membrane. In terms of biological role, essential for magnetosome formation; required for stable accumulation of MamB. May nucleate iron crystal formation. Probably binds and transports iron. Binds divalent cations, possibly up to 3 Zn(2+) per dimer in vitro, probably iron in vivo. One of 7 genes (mamLQBIEMO) able to induce magnetosome membrane biogenesis; coexpression of mamLQRBIEMO in a deletion of the 17 gene mamAB operon restores magnetosome vesicle formation but not magnetite biosynthesis. This chain is Magnetosome protein MamM, found in Magnetospirillum gryphiswaldense (strain DSM 6361 / JCM 21280 / NBRC 15271 / MSR-1).